The sequence spans 657 residues: Tetracycline resistance protein TetQ (657 aa).

The tr-type G domain occupies 17–260; that stretch reads MNIINLGILA…AISSFILPPE (244 aa). Residues 26 to 33, 90 to 94, and 144 to 147 contribute to the GTP site; these read AHIDAGKT, DTPGH, and NKID.

This sequence belongs to the TRAFAC class translation factor GTPase superfamily. Classic translation factor GTPase family. TetM/TetO subfamily.

Functionally, abolishes the inhibitory effect of tetracycline on protein synthesis by non-covalently modifying ribosomes. Confers mild resistance to tetracycline when expressed in E.coli. The sequence is that of Tetracycline resistance protein TetQ (tetQ) from Bacteroides fragilis.